The following is a 234-amino-acid chain: Large ribosomal subunit protein uL1 (234 aa).

It belongs to the universal ribosomal protein uL1 family. In terms of assembly, part of the 50S ribosomal subunit.

Functionally, binds directly to 23S rRNA. The L1 stalk is quite mobile in the ribosome, and is involved in E site tRNA release. Protein L1 is also a translational repressor protein, it controls the translation of the L11 operon by binding to its mRNA. The chain is Large ribosomal subunit protein uL1 from Escherichia coli O127:H6 (strain E2348/69 / EPEC).